The sequence spans 214 residues: Attacin (214 aa).

An N-terminal signal peptide occupies residues 1–19; it reads MSKSVALLLLCACLASGRH. The propeptide occupies 20-26; the sequence is VPTRARR.

The protein belongs to the attacin/sarcotoxin-2 family. Highest expression in fat body and hemocytes and to a much lesser extent in Malpighian tubules, silk gland and midgut.

The protein resides in the secreted. Hemolymph antibacterial protein. Has a wide spectrum of activity against both Gram-positive and Gram-negative bacteria. This is Attacin from Bombyx mori (Silk moth).